The primary structure comprises 74 residues: Omega-conotoxin-like PuIIA (74 aa).

Positions 1–22 are cleaved as a signal peptide; that stretch reads MKLTCVVIVAVLFLTACQLITA. The propeptide occupies 23 to 46; it reads ETYSRGEQKHRALSSTDKNSKLTR. 3 cysteine pairs are disulfide-bonded: cysteine 48-cysteine 62, cysteine 55-cysteine 66, and cysteine 61-cysteine 73.

This sequence belongs to the conotoxin O1 superfamily. In terms of tissue distribution, expressed by the venom duct.

The protein localises to the secreted. Functionally, omega-conotoxins act at presynaptic membranes, they bind and block voltage-gated calcium channels (Cav). The chain is Omega-conotoxin-like PuIIA from Conus pulicarius (Flea-bitten cone).